Here is a 288-residue protein sequence, read N- to C-terminus: Eukaryotic translation initiation factor 3 subunit F-2 (288 aa).

The 138-residue stretch at 12–149 (VLLHPLVLFQ…TRIFCAVATG (138 aa)) folds into the MPN domain.

This sequence belongs to the eIF-3 subunit F family. In terms of assembly, component of the eukaryotic translation initiation factor 3 (eIF-3) complex. The eIF-3 complex interacts with pix.

It localises to the cytoplasm. Its function is as follows. Component of the eukaryotic translation initiation factor 3 (eIF-3) complex, which is involved in protein synthesis of a specialized repertoire of mRNAs and, together with other initiation factors, stimulates binding of mRNA and methionyl-tRNAi to the 40S ribosome. The eIF-3 complex specifically targets and initiates translation of a subset of mRNAs involved in cell proliferation. The polypeptide is Eukaryotic translation initiation factor 3 subunit F-2 (Drosophila persimilis (Fruit fly)).